A 345-amino-acid chain; its full sequence is Transcription initiation factor IIB (345 aa).

The segment at 20–53 (IVLTCPECKVYPPKIVERFSEGDVVCALCGLVLS) adopts a TFIIB-type zinc-finger fold. C24, C27, C45, and C48 together coordinate Zn(2+). Over residues 65 to 78 (TFSNDDHNGDDPSR) the composition is skewed to basic and acidic residues. Residues 65-93 (TFSNDDHNGDDPSRVGEASNPLLDGNNLS) are disordered. Repeat copies occupy residues 136–212 (LCDA…IMKN) and 242–318 (FCSH…ILYE).

It belongs to the TFIIB family. Associates with TFIID-IIA (DA complex) to form TFIID-IIA-IIB (DAB-complex) which is then recognized by polymerase II.

Its subcellular location is the nucleus. Its function is as follows. General factor that plays a major role in the activation of eukaryotic genes transcribed by RNA polymerase II. This Saccharomyces cerevisiae (strain ATCC 204508 / S288c) (Baker's yeast) protein is Transcription initiation factor IIB (SUA7).